Here is a 191-residue protein sequence, read N- to C-terminus: Holliday junction branch migration complex subunit RuvA (191 aa).

The segment at 1 to 64 (MIGSITGNVE…DNITQLYGFL (64 aa)) is domain I. The interval 65 to 142 (NRQEQDYFKM…KMPIEETFSI (78 aa)) is domain II. A flexible linker region spans residues 143-146 (IEND). Positions 146–191 (DDSLAALISLGYEKLKAFNVIQEIKSKTPDASTQEVIRKALQKLSQ) are domain III.

This sequence belongs to the RuvA family. Homotetramer. Forms an RuvA(8)-RuvB(12)-Holliday junction (HJ) complex. HJ DNA is sandwiched between 2 RuvA tetramers; dsDNA enters through RuvA and exits via RuvB. An RuvB hexamer assembles on each DNA strand where it exits the tetramer. Each RuvB hexamer is contacted by two RuvA subunits (via domain III) on 2 adjacent RuvB subunits; this complex drives branch migration. In the full resolvosome a probable DNA-RuvA(4)-RuvB(12)-RuvC(2) complex forms which resolves the HJ.

The protein localises to the cytoplasm. Functionally, the RuvA-RuvB-RuvC complex processes Holliday junction (HJ) DNA during genetic recombination and DNA repair, while the RuvA-RuvB complex plays an important role in the rescue of blocked DNA replication forks via replication fork reversal (RFR). RuvA specifically binds to HJ cruciform DNA, conferring on it an open structure. The RuvB hexamer acts as an ATP-dependent pump, pulling dsDNA into and through the RuvAB complex. HJ branch migration allows RuvC to scan DNA until it finds its consensus sequence, where it cleaves and resolves the cruciform DNA. The sequence is that of Holliday junction branch migration complex subunit RuvA from Ehrlichia ruminantium (strain Gardel).